Here is a 197-residue protein sequence, read N- to C-terminus: MTPDPLNRLVAQLAKLPGIGEKTAQRLAFHILRAPGEYAAELSQAIREVKEKVHLCVRCFSLTDAETCNFCRDARRDERVLCVVETFADLMALERTREFKGRYHVLHGVLSPLEGVGPDQLRIRELLERLNDSRVEELILATNPDVEGEATALYLTRLLKPMGLRVTRIAQGLPMGGDLEFADQATLAKALSARRDL.

The C4-type zinc-finger motif lies at 56–71; the sequence is CVRCFSLTDAETCNFC. The region spanning 79 to 174 is the Toprim domain; the sequence is RVLCVVETFA…RVTRIAQGLP (96 aa).

The protein belongs to the RecR family.

May play a role in DNA repair. It seems to be involved in an RecBC-independent recombinational process of DNA repair. It may act with RecF and RecO. The protein is Recombination protein RecR of Myxococcus xanthus (strain DK1622).